We begin with the raw amino-acid sequence, 445 residues long: UDP-N-acetylmuramoylalanine--D-glutamate ligase (445 aa).

117–123 (GSNGKTT) serves as a coordination point for ATP.

Belongs to the MurCDEF family.

The protein resides in the cytoplasm. It carries out the reaction UDP-N-acetyl-alpha-D-muramoyl-L-alanine + D-glutamate + ATP = UDP-N-acetyl-alpha-D-muramoyl-L-alanyl-D-glutamate + ADP + phosphate + H(+). Its pathway is cell wall biogenesis; peptidoglycan biosynthesis. Functionally, cell wall formation. Catalyzes the addition of glutamate to the nucleotide precursor UDP-N-acetylmuramoyl-L-alanine (UMA). In Neisseria gonorrhoeae (strain NCCP11945), this protein is UDP-N-acetylmuramoylalanine--D-glutamate ligase.